A 480-amino-acid chain; its full sequence is uncharacterized protein (480 aa).

The first 21 residues, 1–21, serve as a signal peptide directing secretion; sequence MSRYFSFFFLALFLHYRIIVA. Disordered stretches follow at residues 38-72 and 116-147; these read SSHLLHHSLPPPLLTQSHSSLSDPDPEPEPSSAEC and SPLITENGTHADPKTPDLKTSSEAQGDTNDQT. Positions 51–60 are enriched in low complexity; the sequence is LTQSHSSLSD. Polar residues predominate over residues 133-144; that stretch reads LKTSSEAQGDTN. The chain crosses the membrane as a helical span at residues 153–173; that stretch reads YAVEIACVCFLIALAINYFVG. The segment at 404–480 is disordered; the sequence is QARNKTESGR…VPKMKMSRSH (77 aa). Over residues 407–465 the composition is skewed to basic and acidic residues; the sequence is NKTESGRQKAAEEAYKELHNARQEALQKKKAEKKKMMEEAEAKMSAEVIRKKEAKERAR. Residues 411 to 467 are a coiled coil; the sequence is SGRQKAAEEAYKELHNARQEALQKKKAEKKKMMEEAEAKMSAEVIRKKEAKERARQV. Positions 466–480 are enriched in basic residues; the sequence is QVKKAVPKMKMSRSH.

It localises to the membrane. This is an uncharacterized protein from Arabidopsis thaliana (Mouse-ear cress).